A 335-amino-acid polypeptide reads, in one-letter code: MSLDINQIALHQLIKRDEQNLELVLRDSLLEPTTTVVDMVAELHRVYSAKNKAYGLFSEESELAQTLRLQRQGEEDFLAFSRAATGRLRDELAKYPFADGGIVLFCHYRYLAVEYLLVAVLNNLSSMRVNENLDINPTHYLDINHADIVARIDLTEWETNPESTRYLTFLKGRVGRKVADFFMDFLGASEGLNAKAQNRGLLQAVDDFTAEAQLDKAERQNVRQQVYSYCNEQLQSGEEIELESLSKELSGVSEVSFREFTADKGYELEESFPADRSTLRQLTKYAGSGGGLTINFDAMLLGERIFWDPATDTLTIKGTPPNLRDQLQRRTSGGN.

The protein belongs to the YejK family.

It is found in the cytoplasm. The protein localises to the nucleoid. This is Nucleoid-associated protein CKO_00588 from Citrobacter koseri (strain ATCC BAA-895 / CDC 4225-83 / SGSC4696).